A 209-amino-acid polypeptide reads, in one-letter code: Ribosomal RNA large subunit methyltransferase E (209 aa).

Gly-63, Trp-65, Asp-83, Asp-99, and Asp-124 together coordinate S-adenosyl-L-methionine. Lys-164 (proton acceptor) is an active-site residue.

The protein belongs to the class I-like SAM-binding methyltransferase superfamily. RNA methyltransferase RlmE family.

It is found in the cytoplasm. It carries out the reaction uridine(2552) in 23S rRNA + S-adenosyl-L-methionine = 2'-O-methyluridine(2552) in 23S rRNA + S-adenosyl-L-homocysteine + H(+). Functionally, specifically methylates the uridine in position 2552 of 23S rRNA at the 2'-O position of the ribose in the fully assembled 50S ribosomal subunit. This Shewanella baltica (strain OS223) protein is Ribosomal RNA large subunit methyltransferase E.